We begin with the raw amino-acid sequence, 555 residues long: Connector enhancer of kinase suppressor of ras 3 (555 aa).

The SAM domain maps to 7-72 (WSPKQVVDWT…LEAVDLLCAL (66 aa)). The CRIC domain maps to 80-174 (NMKNLVLKLR…TTVQKDCFVA (95 aa)). Positions 211–293 (EVHLPNIKPG…GVVLLLKKRP (83 aa)) constitute a PDZ domain. Disordered regions lie at residues 309–334 (WKPPLVQTSPPPATTQSPESTMDTSL), 347–390 (PPPP…FLDQ), and 517–537 (IPFQEEGTKKKSGSSATKSSS). A DUF1170 domain is found at 325–546 (SPESTMDTSL…STEPSLLVSW (222 aa)). 2 positions are modified to phosphoserine: serine 381 and serine 383.

The protein belongs to the CNKSR family. In terms of assembly, interacts with epithelial sodium channel ENaC. Interacts directly with SCNN1A (ENaC subunit alpha) and SCNN1B (ENaC subunit beta) C-terminal tails. Interacts with ENaC regulatory proteins NEDD4L, RAF1 and SGK1.

Its subcellular location is the cytoplasm. It localises to the apical cell membrane. Its function is as follows. Involved in transepithelial sodium transport. Regulates aldosterone-induced and epithelial sodium channel (ENaC)-mediated sodium transport through regulation of ENaC cell surface expression. Acts as a scaffold protein coordinating the assembly of an ENaC-regulatory complex (ERC). The sequence is that of Connector enhancer of kinase suppressor of ras 3 (CNKSR3) from Homo sapiens (Human).